Consider the following 280-residue polypeptide: Divalent cation/proton antiporter GDT1 (280 aa).

At 1–3 (MGN) the chain is on the cytoplasmic side. Residues 4–24 (MIKKASLIALLPLFTAAAAAA) form a helical membrane-spanning segment. Topologically, residues 25-45 (TDAETSMESGSSSHLKSFLMS) are vacuolar. A helical membrane pass occupies residues 46–66 (VSMIGLSEIGDKTFLIAALMA). Residues 67–71 (MRHKR) are Cytoplasmic-facing. A helical transmembrane segment spans residues 72–92 (VLVFSAAATSLAIMTILSGVV). Over 93-104 (GHSAVAFLSERY) the chain is Vacuolar. The chain crosses the membrane as a helical span at residues 105–125 (TAFFAGILFLVFGYKLTMEGL). The Cytoplasmic segment spans residues 126-183 (EMSKDAGVEEEMAEVEEEIAIKDMNQDMDDVEKGGDTAYDKQLKNASIGKKIVHRIRE). A helical membrane pass occupies residues 184–204 (LASFMFSPVWVQIFLMVFLGE). The Vacuolar portion of the chain corresponds to 205–222 (LGDRSQISIIAMATDSDY). A helical transmembrane segment spans residues 223-243 (WYVIAGAVIGHAICSGLAVVG). Topologically, residues 244–255 (GKLLATRISIRT) are cytoplasmic. The chain crosses the membrane as a helical span at residues 256-276 (ITLASSLLFFIFALMYIYQAF). Residues 277–280 (TTQD) lie on the Vacuolar side of the membrane.

The protein belongs to the GDT1 family.

Its subcellular location is the golgi apparatus. The protein resides in the cis-Golgi network membrane. The catalysed reaction is Ca(2+)(in) + n H(+)(out) = Ca(2+)(out) + n H(+)(in). The enzyme catalyses Mn(2+)(in) + n H(+)(out) = Mn(2+)(out) + n H(+)(in). Its function is as follows. Divalent cation:proton antiporter that exchanges calcium or manganese ions for protons across the Golgi membrane. Mediates the reversible transport of calcium or manganese to the Golgi lumen driven by the proton gradient and possibly the membrane potential generated by V-ATPase. Provides calcium or manganese cofactors to resident Golgi enzymes and contributes to the maintenance of an acidic luminal Golgi pH required for proper functioning of the secretory pathway. The transport stoichiometry remains to be elucidated. The protein is Divalent cation/proton antiporter GDT1 of Saccharomyces cerevisiae (strain ATCC 204508 / S288c) (Baker's yeast).